A 346-amino-acid chain; its full sequence is Signal recognition particle receptor FtsY (346 aa).

Residues 143–150 (GVNGVGKT), 225–229 (DTSGR), and 289–292 (TKMD) contribute to the GTP site.

Belongs to the GTP-binding SRP family. FtsY subfamily. In terms of assembly, part of the signal recognition particle protein translocation system, which is composed of SRP and FtsY.

The protein resides in the cell membrane. Its subcellular location is the cytoplasm. It catalyses the reaction GTP + H2O = GDP + phosphate + H(+). In terms of biological role, involved in targeting and insertion of nascent membrane proteins into the cytoplasmic membrane. Acts as a receptor for the complex formed by the signal recognition particle (SRP) and the ribosome-nascent chain (RNC). The chain is Signal recognition particle receptor FtsY from Mycoplasma genitalium (strain ATCC 33530 / DSM 19775 / NCTC 10195 / G37) (Mycoplasmoides genitalium).